Here is an 84-residue protein sequence, read N- to C-terminus: Small ribosomal subunit protein bS18 (84 aa).

It belongs to the bacterial ribosomal protein bS18 family. In terms of assembly, part of the 30S ribosomal subunit. Forms a tight heterodimer with protein bS6.

Functionally, binds as a heterodimer with protein bS6 to the central domain of the 16S rRNA, where it helps stabilize the platform of the 30S subunit. The chain is Small ribosomal subunit protein bS18 from Vesicomyosocius okutanii subsp. Calyptogena okutanii (strain HA).